Consider the following 462-residue polypeptide: A-type ATP synthase subunit B (462 aa).

It belongs to the ATPase alpha/beta chains family. As to quaternary structure, has multiple subunits with at least A(3), B(3), C, D, E, F, H, I and proteolipid K(x).

It is found in the cell membrane. In terms of biological role, component of the A-type ATP synthase that produces ATP from ADP in the presence of a proton gradient across the membrane. The B chain is a regulatory subunit. The protein is A-type ATP synthase subunit B of Methanococcus vannielii (strain ATCC 35089 / DSM 1224 / JCM 13029 / OCM 148 / SB).